The following is a 458-amino-acid chain: ATP synthase subunit beta (458 aa).

An ATP-binding site is contributed by 148-155; the sequence is GGAGVGKT.

It belongs to the ATPase alpha/beta chains family. F-type ATPases have 2 components, CF(1) - the catalytic core - and CF(0) - the membrane proton channel. CF(1) has five subunits: alpha(3), beta(3), gamma(1), delta(1), epsilon(1). CF(0) has three main subunits: a(1), b(2) and c(9-12). The alpha and beta chains form an alternating ring which encloses part of the gamma chain. CF(1) is attached to CF(0) by a central stalk formed by the gamma and epsilon chains, while a peripheral stalk is formed by the delta and b chains.

It is found in the cell inner membrane. The enzyme catalyses ATP + H2O + 4 H(+)(in) = ADP + phosphate + 5 H(+)(out). Its function is as follows. Produces ATP from ADP in the presence of a proton gradient across the membrane. The catalytic sites are hosted primarily by the beta subunits. The chain is ATP synthase subunit beta from Pseudomonas putida (strain GB-1).